Reading from the N-terminus, the 305-residue chain is UDP-N-acetylenolpyruvoylglucosamine reductase 2 (305 aa).

The FAD-binding PCMH-type domain occupies 33–197 (VGGKADVFVA…LEARFELEEG (165 aa)). The active site involves R176. S226 functions as the Proton donor in the catalytic mechanism. E296 is an active-site residue.

The protein belongs to the MurB family. It depends on FAD as a cofactor.

The protein resides in the cytoplasm. It catalyses the reaction UDP-N-acetyl-alpha-D-muramate + NADP(+) = UDP-N-acetyl-3-O-(1-carboxyvinyl)-alpha-D-glucosamine + NADPH + H(+). It functions in the pathway cell wall biogenesis; peptidoglycan biosynthesis. Functionally, cell wall formation. This is UDP-N-acetylenolpyruvoylglucosamine reductase 2 from Bacillus thuringiensis subsp. konkukian (strain 97-27).